The sequence spans 245 residues: 1-(5-phosphoribosyl)-5-[(5-phosphoribosylamino)methylideneamino] imidazole-4-carboxamide isomerase (245 aa).

Asp7 acts as the Proton acceptor in catalysis. The active-site Proton donor is Asp129.

This sequence belongs to the HisA/HisF family.

It is found in the cytoplasm. It carries out the reaction 1-(5-phospho-beta-D-ribosyl)-5-[(5-phospho-beta-D-ribosylamino)methylideneamino]imidazole-4-carboxamide = 5-[(5-phospho-1-deoxy-D-ribulos-1-ylimino)methylamino]-1-(5-phospho-beta-D-ribosyl)imidazole-4-carboxamide. Its pathway is amino-acid biosynthesis; L-histidine biosynthesis; L-histidine from 5-phospho-alpha-D-ribose 1-diphosphate: step 4/9. This chain is 1-(5-phosphoribosyl)-5-[(5-phosphoribosylamino)methylideneamino] imidazole-4-carboxamide isomerase, found in Shewanella baltica (strain OS195).